We begin with the raw amino-acid sequence, 285 residues long: Protein FD (285 aa).

The span at 1–12 (MLSSAKHQRNHR) shows a compositional bias: basic residues. Disordered regions lie at residues 1–59 (MLSS…QKRS), 79–107 (NRHS…NSIF), 115–134 (LNQE…NGDS), 198–236 (SSSF…ARKQ), and 257–285 (KRQQ…TAPF). The segment covering 13-25 (LSATNKNQTLTKV) has biased composition (polar residues). Residues 26 to 50 (SSISSSSPSSSSSSSSTSSSSPLPS) are compositionally biased toward low complexity. Polar residues predominate over residues 98–107 (HHNQNPNSIF). The bZIP domain maps to 214–277 (GNRRHKRMIK…AIQQPKKNTL (64 aa)). The basic motif stretch occupies residues 216-235 (RRHKRMIKNRESAARSRARK). Residues 242–263 (LELEVAHLQAENARLKRQQDQL) are leucine-zipper. Residues 272–285 (PKKNTLQRSSTAPF) show a composition bias toward polar residues. At T282 the chain carries Phosphothreonine.

It belongs to the bZIP family. As to quaternary structure, self-interacts. Interacts with FT and FDP/BZIP27. Interacts with GRF3 and GRF4, and in a calcium-independent manner, with CPK6 and CPK33. In terms of processing, phosphorylated at Thr-282 in a calcium-dependent manner by CPK6 and CPK33. In terms of tissue distribution, highly expressed in shoot apex.

The protein resides in the nucleus. In terms of biological role, transcription factor required for the transition to flowering promoted by FT. The chain is Protein FD from Arabidopsis thaliana (Mouse-ear cress).